Consider the following 424-residue polypeptide: Imidazolonepropionase (424 aa).

Positions 81 and 83 each coordinate Fe(3+). Residues H81 and H83 each coordinate Zn(2+). The 4-imidazolone-5-propanoate site is built by R90, Y153, and H186. Y153 contacts N-formimidoyl-L-glutamate. H251 is a binding site for Fe(3+). Position 251 (H251) interacts with Zn(2+). Residue E254 participates in 4-imidazolone-5-propanoate binding. D325 serves as a coordination point for Fe(3+). Zn(2+) is bound at residue D325. The N-formimidoyl-L-glutamate site is built by N327 and G329. Residue T330 coordinates 4-imidazolone-5-propanoate.

The protein belongs to the metallo-dependent hydrolases superfamily. HutI family. Zn(2+) is required as a cofactor. Fe(3+) serves as cofactor.

The protein resides in the cytoplasm. It carries out the reaction 4-imidazolone-5-propanoate + H2O = N-formimidoyl-L-glutamate. It participates in amino-acid degradation; L-histidine degradation into L-glutamate; N-formimidoyl-L-glutamate from L-histidine: step 3/3. In terms of biological role, catalyzes the hydrolytic cleavage of the carbon-nitrogen bond in imidazolone-5-propanoate to yield N-formimidoyl-L-glutamate. It is the third step in the universal histidine degradation pathway. In Syntrophobacter fumaroxidans (strain DSM 10017 / MPOB), this protein is Imidazolonepropionase.